The sequence spans 114 residues: MKKIKGFGGKSYGKIDKSSGFEQIQQKMRDEIEKLENSFENIEVSSTSGGGAVKVTAKCNYEIVSIEYEDSLLEDREMFNDLIVAAINEALREVTKKREEELSKIVGLSGLPGL.

This sequence belongs to the YbaB/EbfC family. In terms of assembly, homodimer.

Its subcellular location is the cytoplasm. The protein localises to the nucleoid. Binds to DNA and alters its conformation. May be involved in regulation of gene expression, nucleoid organization and DNA protection. The sequence is that of Nucleoid-associated protein Tlet_0999 from Pseudothermotoga lettingae (strain ATCC BAA-301 / DSM 14385 / NBRC 107922 / TMO) (Thermotoga lettingae).